Consider the following 201-residue polypeptide: Transgelin (201 aa).

Ala-2 carries the N-acetylalanine modification. The region spanning Glu-24–Ala-137 is the Calponin-homology (CH) domain. The could be involved in actin-binding stretch occupies residues Lys-154 to Arg-161. A Phosphoserine modification is found at Ser-166. At Lys-172 the chain carries N6-acetyllysine. One copy of the Calponin-like repeat lies at Ile-175–Ile-200. Ser-181 bears the Phosphoserine mark. Arg-183 is modified (omega-N-methylarginine).

This sequence belongs to the calponin family. As to expression, smooth muscle and mesenchymal cells but not in skeletal muscle or lymphocytes.

The protein localises to the cytoplasm. Actin cross-linking/gelling protein. This is Transgelin (Tagln) from Rattus norvegicus (Rat).